The following is a 326-amino-acid chain: uncharacterized protein (326 aa).

The region spanning 15–76 (VRIEKFCLKL…IEPYLHNHSE (62 aa)) is the S4 RNA-binding domain. The active site involves Asp-147.

This sequence belongs to the pseudouridine synthase RluA family.

It catalyses the reaction a uridine in RNA = a pseudouridine in RNA. This is an uncharacterized protein from Mycoplasma pneumoniae (strain ATCC 29342 / M129 / Subtype 1) (Mycoplasmoides pneumoniae).